The primary structure comprises 240 residues: Small ribosomal subunit protein uS3 (240 aa).

A KH type-2 domain is found at 39 to 109 (IRQYIEKTLN…QIRVNVIEVP (71 aa)). The interval 219 to 240 (APPSQPRRKSRRQQFDDRSQDG) is disordered. The span at 231–240 (QQFDDRSQDG) shows a compositional bias: basic and acidic residues.

The protein belongs to the universal ribosomal protein uS3 family. Part of the 30S ribosomal subunit. Forms a tight complex with proteins S10 and S14.

Its function is as follows. Binds the lower part of the 30S subunit head. Binds mRNA in the 70S ribosome, positioning it for translation. This chain is Small ribosomal subunit protein uS3, found in Synechocystis sp. (strain ATCC 27184 / PCC 6803 / Kazusa).